A 519-amino-acid polypeptide reads, in one-letter code: uncharacterized protein (519 aa).

A run of 4 helical transmembrane segments spans residues 141 to 161 (GSSLLPYGAGAASCFGAANVF), 202 to 222 (LGETHLVGLGAIGHGALWALA), 385 to 405 (FVVRVATAMGVPFEPLAPFVG), and 433 to 453 (TVVPMAFQSALAGIMLAAELV).

The protein localises to the cell membrane. This is an uncharacterized protein from Sinorhizobium fredii (strain NBRC 101917 / NGR234).